We begin with the raw amino-acid sequence, 284 residues long: ATP synthase subunit beta, chloroplastic (284 aa).

Belongs to the ATPase alpha/beta chains family. As to quaternary structure, F-type ATPases have 2 components, CF(1) - the catalytic core - and CF(0) - the membrane proton channel. CF(1) has five subunits: alpha(3), beta(3), gamma(1), delta(1), epsilon(1). CF(0) has four main subunits: a(1), b(1), b'(1) and c(9-12).

The protein resides in the plastid. Its subcellular location is the chloroplast thylakoid membrane. It catalyses the reaction ATP + H2O + 4 H(+)(in) = ADP + phosphate + 5 H(+)(out). Produces ATP from ADP in the presence of a proton gradient across the membrane. The catalytic sites are hosted primarily by the beta subunits. The chain is ATP synthase subunit beta, chloroplastic (atpB) from Asplenium nidus (Bird's nest fern).